The primary structure comprises 215 residues: Putative B3 domain-containing protein Os11g0625400 (215 aa).

Positions 1–51 (MTVELEKIAGSFFISKGWKTFVHRTGLLSGQYIRFQVLTPSKINVLLFDKK) form a DNA-binding region, TF-B3 1. The tract at residues 92-117 (SHTSNKETSSDSRTESMTDIPSSSDN) is disordered. Over residues 95–107 (SNKETSSDSRTES) the composition is skewed to basic and acidic residues. The segment covering 108–117 (MTDIPSSSDN) has biased composition (polar residues). The segment at residues 123 to 215 (DIKNYISIIG…PNVKITIDVL (93 aa)) is a DNA-binding region (TF-B3 2).

Its subcellular location is the nucleus. This Oryza sativa subsp. japonica (Rice) protein is Putative B3 domain-containing protein Os11g0625400.